A 377-amino-acid polypeptide reads, in one-letter code: Succinyl-diaminopimelate desuccinylase 2 (377 aa).

Histidine 62 is a Zn(2+) binding site. The active site involves aspartate 64. Aspartate 95 lines the Zn(2+) pocket. Glutamate 129 serves as the catalytic Proton acceptor. Zn(2+) contacts are provided by glutamate 130, glutamate 158, and histidine 350.

The protein belongs to the peptidase M20A family. DapE subfamily. Homodimer. The cofactor is Zn(2+). Co(2+) serves as cofactor.

It carries out the reaction N-succinyl-(2S,6S)-2,6-diaminopimelate + H2O = (2S,6S)-2,6-diaminopimelate + succinate. It functions in the pathway amino-acid biosynthesis; L-lysine biosynthesis via DAP pathway; LL-2,6-diaminopimelate from (S)-tetrahydrodipicolinate (succinylase route): step 3/3. Catalyzes the hydrolysis of N-succinyl-L,L-diaminopimelic acid (SDAP), forming succinate and LL-2,6-diaminopimelate (DAP), an intermediate involved in the bacterial biosynthesis of lysine and meso-diaminopimelic acid, an essential component of bacterial cell walls. The sequence is that of Succinyl-diaminopimelate desuccinylase 2 from Shewanella loihica (strain ATCC BAA-1088 / PV-4).